A 916-amino-acid chain; its full sequence is Protein translocase subunit SecA (916 aa).

ATP is bound by residues Gln-87, 105–109 (GEGKT), and Asp-507. Residues Cys-900, Cys-902, Cys-911, and His-912 each coordinate Zn(2+).

This sequence belongs to the SecA family. Monomer and homodimer. Part of the essential Sec protein translocation apparatus which comprises SecA, SecYEG and auxiliary proteins SecDF-YajC and YidC. Zn(2+) is required as a cofactor.

The protein resides in the cell inner membrane. The protein localises to the cytoplasm. The catalysed reaction is ATP + H2O + cellular proteinSide 1 = ADP + phosphate + cellular proteinSide 2.. Its function is as follows. Part of the Sec protein translocase complex. Interacts with the SecYEG preprotein conducting channel. Has a central role in coupling the hydrolysis of ATP to the transfer of proteins into and across the cell membrane, serving both as a receptor for the preprotein-SecB complex and as an ATP-driven molecular motor driving the stepwise translocation of polypeptide chains across the membrane. The sequence is that of Protein translocase subunit SecA from Neisseria meningitidis serogroup C / serotype 2a (strain ATCC 700532 / DSM 15464 / FAM18).